A 413-amino-acid chain; its full sequence is Serine hydroxymethyltransferase (413 aa).

Residues L117 and 121-123 (GHL) contribute to the (6S)-5,6,7,8-tetrahydrofolate site. N6-(pyridoxal phosphate)lysine is present on K226. (6S)-5,6,7,8-tetrahydrofolate is bound by residues E241 and 349–351 (SPF).

This sequence belongs to the SHMT family. In terms of assembly, homodimer. Requires pyridoxal 5'-phosphate as cofactor.

Its subcellular location is the cytoplasm. It carries out the reaction (6R)-5,10-methylene-5,6,7,8-tetrahydrofolate + glycine + H2O = (6S)-5,6,7,8-tetrahydrofolate + L-serine. Its pathway is one-carbon metabolism; tetrahydrofolate interconversion. It participates in amino-acid biosynthesis; glycine biosynthesis; glycine from L-serine: step 1/1. In terms of biological role, catalyzes the reversible interconversion of serine and glycine with tetrahydrofolate (THF) serving as the one-carbon carrier. This reaction serves as the major source of one-carbon groups required for the biosynthesis of purines, thymidylate, methionine, and other important biomolecules. Also exhibits THF-independent aldolase activity toward beta-hydroxyamino acids, producing glycine and aldehydes, via a retro-aldol mechanism. The chain is Serine hydroxymethyltransferase from Halalkalibacterium halodurans (strain ATCC BAA-125 / DSM 18197 / FERM 7344 / JCM 9153 / C-125) (Bacillus halodurans).